The sequence spans 460 residues: Tol-Pal system protein TolB (460 aa).

A signal peptide spans Met1 to Ser22.

It belongs to the TolB family. In terms of assembly, the Tol-Pal system is composed of five core proteins: the inner membrane proteins TolA, TolQ and TolR, the periplasmic protein TolB and the outer membrane protein Pal. They form a network linking the inner and outer membranes and the peptidoglycan layer.

Its subcellular location is the periplasm. Its function is as follows. Part of the Tol-Pal system, which plays a role in outer membrane invagination during cell division and is important for maintaining outer membrane integrity. TolB occupies a key intermediary position in the Tol-Pal system because it communicates directly with both membrane-embedded components, Pal in the outer membrane and TolA in the inner membrane. This is Tol-Pal system protein TolB from Blochmanniella floridana.